A 491-amino-acid chain; its full sequence is Cobyric acid synthase (491 aa).

Positions 250 to 437 constitute a GATase cobBQ-type domain; it reads QLRVVVPVLP…VHGVFDHPQA (188 aa). Residue cysteine 331 is the Nucleophile of the active site. Residue histidine 429 is part of the active site.

Belongs to the CobB/CobQ family. CobQ subfamily.

Its pathway is cofactor biosynthesis; adenosylcobalamin biosynthesis. In terms of biological role, catalyzes amidations at positions B, D, E, and G on adenosylcobyrinic A,C-diamide. NH(2) groups are provided by glutamine, and one molecule of ATP is hydrogenolyzed for each amidation. The sequence is that of Cobyric acid synthase from Xanthomonas axonopodis pv. citri (strain 306).